Consider the following 416-residue polypeptide: Gamma-glutamyl phosphate reductase (416 aa).

This sequence belongs to the gamma-glutamyl phosphate reductase family.

Its subcellular location is the cytoplasm. It carries out the reaction L-glutamate 5-semialdehyde + phosphate + NADP(+) = L-glutamyl 5-phosphate + NADPH + H(+). The protein operates within amino-acid biosynthesis; L-proline biosynthesis; L-glutamate 5-semialdehyde from L-glutamate: step 2/2. Catalyzes the NADPH-dependent reduction of L-glutamate 5-phosphate into L-glutamate 5-semialdehyde and phosphate. The product spontaneously undergoes cyclization to form 1-pyrroline-5-carboxylate. The sequence is that of Gamma-glutamyl phosphate reductase from Streptococcus thermophilus (strain ATCC BAA-491 / LMD-9).